The chain runs to 146 residues: Anti-sigma F factor (146 aa).

Belongs to the anti-sigma-factor family.

The catalysed reaction is L-seryl-[protein] + ATP = O-phospho-L-seryl-[protein] + ADP + H(+). The enzyme catalyses L-threonyl-[protein] + ATP = O-phospho-L-threonyl-[protein] + ADP + H(+). Binds to sigma F and blocks its ability to form an RNA polymerase holoenzyme (E-sigma F). Phosphorylates SpoIIAA on a serine residue. This phosphorylation may enable SpoIIAA to act as an anti-anti-sigma factor that counteracts SpoIIAB and thus releases sigma F from inhibition. This Geobacillus sp. (strain WCH70) protein is Anti-sigma F factor.